Reading from the N-terminus, the 723-residue chain is DNA-binding protein RFX2 (723 aa).

The disordered stretch occupies residues M1 to M46. Over residues S10–A20 the composition is skewed to low complexity. Position 28 is a phosphoserine (S28). The segment at residues H199 to P274 is a DNA-binding region (RFX-type winged-helix). Residues Q292 to Q332 form a disordered region. Low complexity predominate over residues D308 to S321. The span at T322–Q332 shows a compositional bias: polar residues. Position 416 is a phosphoserine (S416). Residues M688 to I723 are disordered.

The protein belongs to the RFX family. Homodimer; probably only forms homodimers in testis. Heterodimer; heterodimerizes with RFX1 and RFX3.

The protein resides in the nucleus. It is found in the cytoplasm. In terms of biological role, transcription factor that acts as a key regulator of spermatogenesis. Acts by regulating expression of genes required for the haploid phase during spermiogenesis, such as genes required for cilium assembly and function. Recognizes and binds the X-box, a regulatory motif with DNA sequence 5'-GTNRCC(0-3N)RGYAAC-3' present on promoters. Probably activates transcription of the testis-specific histone gene H1-6. The polypeptide is DNA-binding protein RFX2 (RFX2) (Homo sapiens (Human)).